The chain runs to 178 residues: Bifunctional protein PyrR (178 aa).

The PRPP-binding motif lies at 99–111 (VVLVDDVIFKGRT).

This sequence belongs to the purine/pyrimidine phosphoribosyltransferase family. PyrR subfamily.

It catalyses the reaction UMP + diphosphate = 5-phospho-alpha-D-ribose 1-diphosphate + uracil. Its function is as follows. Regulates the transcription of the pyrimidine nucleotide (pyr) operon in response to exogenous pyrimidines. Also displays a weak uracil phosphoribosyltransferase activity which is not physiologically significant. The sequence is that of Bifunctional protein PyrR from Nostoc punctiforme (strain ATCC 29133 / PCC 73102).